Consider the following 92-residue polypeptide: Envelope glycoprotein J (92 aa).

The signal sequence occupies residues 1-21 (MSLRAVWHLGLLGSLVGAVLA). At 22–49 (ATHRGPAANTTDPLTHAPVSPHPSPLGG) the chain is on the extracellular side. N30 carries N-linked (GlcNAc...) asparagine; by host glycosylation. A helical membrane pass occupies residues 50–70 (FAVPLVVGGLCAVVLGAACLL). Topologically, residues 71 to 92 (ELLRRTCRGWGRYHPYMDPVVV) are cytoplasmic.

It belongs to the alphaherpesvirinae glycoprotein J family.

The protein resides in the host Golgi apparatus membrane. It is found in the host endoplasmic reticulum membrane. It localises to the host endosome membrane. Its function is as follows. Inhibits host cell apoptosis. Induces an increase in reactive oxygen species (ROS) in the host cell. This is Envelope glycoprotein J (gJ) from Homo sapiens (Human).